A 360-amino-acid polypeptide reads, in one-letter code: Photosystem II protein D1 1 (360 aa).

Transmembrane regions (helical) follow at residues 29 to 46 (YVGW…SATI), 118 to 133 (HFLI…EWEL), and 142 to 156 (WICI…AAAA). Histidine 118 provides a ligand contact to chlorophyll a. Tyrosine 126 is a binding site for pheophytin a. 2 residues coordinate [CaMn4O5] cluster: aspartate 170 and glutamate 189. A helical transmembrane segment spans residues 197-218 (FHMLGVAGVFGGSLFSAMHGSL). Residue histidine 198 participates in chlorophyll a binding. Residues histidine 215 and 264–265 (SF) each bind a quinone. Histidine 215 serves as a coordination point for Fe cation. Position 272 (histidine 272) interacts with Fe cation. Residues 274–288 (FLAAWPVIGIWFTAL) form a helical membrane-spanning segment. Histidine 332, glutamate 333, aspartate 342, and alanine 344 together coordinate [CaMn4O5] cluster. Residues 345 to 360 (GTESAPVAVGNADLNG) constitute a propeptide that is removed on maturation.

It belongs to the reaction center PufL/M/PsbA/D family. PSII is composed of 1 copy each of membrane proteins PsbA, PsbB, PsbC, PsbD, PsbE, PsbF, PsbH, PsbI, PsbJ, PsbK, PsbL, PsbM, PsbT, PsbX, Psb30/Ycf12, peripheral proteins PsbO, CyanoQ (PsbQ), PsbU, PsbV and a large number of cofactors. It forms dimeric complexes. The cofactor is The D1/D2 heterodimer binds P680, chlorophylls that are the primary electron donor of PSII, and subsequent electron acceptors. It shares a non-heme iron and each subunit binds pheophytin, quinone, additional chlorophylls, carotenoids and lipids. D1 provides most of the ligands for the Mn4-Ca-O5 cluster of the oxygen-evolving complex (OEC). There is also a Cl(-1) ion associated with D1 and D2, which is required for oxygen evolution. The PSII complex binds additional chlorophylls, carotenoids and specific lipids.. Tyr-161 forms a radical intermediate that is referred to as redox-active TyrZ, YZ or Y-Z. In terms of processing, C-terminally processed by CtpA; processing is essential to allow assembly of the oxygen-evolving complex and thus photosynthetic growth.

The protein localises to the cell inner membrane. The catalysed reaction is 2 a plastoquinone + 4 hnu + 2 H2O = 2 a plastoquinol + O2. Its function is as follows. Photosystem II (PSII) is a light-driven water:plastoquinone oxidoreductase that uses light energy to abstract electrons from H(2)O, generating O(2) and a proton gradient subsequently used for ATP formation. It consists of a core antenna complex that captures photons, and an electron transfer chain that converts photonic excitation into a charge separation. The D1/D2 (PsbA/PsbD) reaction center heterodimer binds P680, the primary electron donor of PSII as well as several subsequent electron acceptors. This Gloeobacter violaceus (strain ATCC 29082 / PCC 7421) protein is Photosystem II protein D1 1.